The following is a 378-amino-acid chain: Endopolygalacturonase I (378 aa).

An N-terminal signal peptide occupies residues 1–20; it reads MHLNTTLLVSLALGAASVLA. A propeptide spanning residues 21–39 is cleaved from the precursor; the sequence is SPAPPAITAPPTAEEIAKR. The cysteines at positions 43 and 61 are disulfide-linked. A glycan (O-linked (Man...) threonine) is linked at Thr44. Ser46, Ser48, Ser52, Ser53, Ser55, Ser57, and Ser62 each carry an O-linked (Man...) serine glycan. O-linked (Man...) threonine glycosylation occurs at Thr63. The O-linked (Man...) serine glycan is linked to Ser73. PbH1 repeat units lie at residues 174-204, 205-226, 227-247, 256-277, and 285-307; these read SDYL…DIGT, STYV…AVNS, GENI…SIGS, VKNV…RIKT, and VSDV…VVQQ. Asp219 acts as the Proton donor in catalysis. Cys221 and Cys237 are disulfide-bonded. The active site involves His241. Asn258 carries N-linked (GlcNAc...) asparagine glycosylation. 2 disulfide bridges follow: Cys345–Cys350 and Cys369–Cys378.

It belongs to the glycosyl hydrolase 28 family.

The protein localises to the secreted. The enzyme catalyses (1,4-alpha-D-galacturonosyl)n+m + H2O = (1,4-alpha-D-galacturonosyl)n + (1,4-alpha-D-galacturonosyl)m.. Functionally, involved in maceration and soft-rotting of plant tissue. Hydrolyzes the 1,4-alpha glycosidic bonds of de-esterified pectate in the smooth region of the plant cell wall. The protein is Endopolygalacturonase I (pgaI) of Aspergillus aculeatus.